The chain runs to 734 residues: PI-PLC X-box domain-containing protein DDB_G0293730 (734 aa).

Residues 8–70 (IKNILLKIEK…ELNEKLIVEK (63 aa)) adopt a coiled-coil conformation. The 165-residue stretch at 440–604 (KLKDRKVRNL…CIYDDLVNPL (165 aa)) folds into the PI-PLC X-box domain.

The chain is PI-PLC X-box domain-containing protein DDB_G0293730 from Dictyostelium discoideum (Social amoeba).